Reading from the N-terminus, the 343-residue chain is UDP-3-O-acylglucosamine N-acyltransferase (343 aa).

The Proton acceptor role is filled by His236.

Belongs to the transferase hexapeptide repeat family. LpxD subfamily. As to quaternary structure, homotrimer.

The catalysed reaction is a UDP-3-O-[(3R)-3-hydroxyacyl]-alpha-D-glucosamine + a (3R)-hydroxyacyl-[ACP] = a UDP-2-N,3-O-bis[(3R)-3-hydroxyacyl]-alpha-D-glucosamine + holo-[ACP] + H(+). It functions in the pathway bacterial outer membrane biogenesis; LPS lipid A biosynthesis. In terms of biological role, catalyzes the N-acylation of UDP-3-O-acylglucosamine using 3-hydroxyacyl-ACP as the acyl donor. Is involved in the biosynthesis of lipid A, a phosphorylated glycolipid that anchors the lipopolysaccharide to the outer membrane of the cell. This is UDP-3-O-acylglucosamine N-acyltransferase from Syntrophotalea carbinolica (strain DSM 2380 / NBRC 103641 / GraBd1) (Pelobacter carbinolicus).